The primary structure comprises 270 residues: MSDLHNESIFITGGGSGLGLALVERFIEKGAQVATLELSAAKVASLRQRFGEHILAVEGNVTCYADYQRAVDQILTRSGKLDCFIGNAGIWDHNASLVNTPAETLETGFHELFNVNVLGYLLGAKACAPALIASEGSMIFTLSNAAWYPGGGGPLYTASKHAATGLIRQLAYELAPKVRVNGVGPCGMASDLRGPQALGQSETSIMQSLTPEKIAAILPLQFFPQPADFTGPYVMLTSRRNNRALSGVMINADAGLAIRGIRHVAAGLDL.

10-34 (FITGGGSGLGLALVERFIEKGAQVA) contacts NAD(+). Substrate is bound at residue Ser143. Tyr156 acts as the Proton acceptor in catalysis.

Belongs to the short-chain dehydrogenases/reductases (SDR) family.

The catalysed reaction is 3-(cis-5,6-dihydroxycyclohexa-1,3-dien-1-yl)propanoate + NAD(+) = 3-(2,3-dihydroxyphenyl)propanoate + NADH + H(+). The enzyme catalyses (2E)-3-(cis-5,6-dihydroxycyclohexa-1,3-dien-1-yl)prop-2-enoate + NAD(+) = (2E)-3-(2,3-dihydroxyphenyl)prop-2-enoate + NADH + H(+). It participates in aromatic compound metabolism; 3-phenylpropanoate degradation. Functionally, converts 3-phenylpropionate-dihydrodiol (PP-dihydrodiol) and cinnamic acid-dihydrodiol (CI-dihydrodiol) into 3-(2,3-dihydroxylphenyl)propanoic acid (DHPP) and 2,3-dihydroxicinnamic acid (DHCI), respectively. This chain is 3-phenylpropionate-dihydrodiol/cinnamic acid-dihydrodiol dehydrogenase (hcaB), found in Escherichia coli.